The primary structure comprises 233 residues: Cilia- and flagella-associated protein 299 (233 aa).

The protein resides in the cytoplasm. Its subcellular location is the nucleus. May be involved in spermatogenesis. The protein is Cilia- and flagella-associated protein 299 of Xenopus laevis (African clawed frog).